The chain runs to 369 residues: MVRSGKKAVVLATVAFCATSVVQKTCGFVPSPLRQRAAAAGAAASVATMFAPAAFADEIGDAAKTLGDASYAFAKEVDWNNGIFLQAPGKLQPLAALKAIDKMIVMGAAADPQLLKAAAEAHHKAITTVSGANGVTSRADWDNVNAALGRVISAVPEKMVMDVYNSVAKITDPKVPAYMNSLVNGADAEKAYAGFLAFKDVVKKNQVTSAAGPATVPSGDTIGVAAQKLSDASYPFLKQIDWLSDVYLKPLPGVSAQQSLKAIDRMIVMGAQADGNALKAAAEAHHKAIGSIDAKGVTSAADYAEVNAAIGRVVASVPKSTVMDVYKAMASVTDTGIPLNMFSKVNPLDANAAAKAFYTFKDVVLAAQR.

The transit peptide at 1–56 directs the protein to the chloroplast; sequence MVRSGKKAVVLATVAFCATSVVQKTCGFVPSPLRQRAAAAGAAASVATMFAPAAFA. 2 consecutive repeat copies span residues 57–219 and 220–369.

Homotrimer.

The protein localises to the plastid. Its subcellular location is the chloroplast. Water-soluble antenna for capture of solar energy in the blue-green range. Peridinin is an asymmetric carotenoid. The chain is Peridinin-chlorophyll a-binding protein 2, chloroplastic from Amphidinium carterae (Dinoflagellate).